The chain runs to 421 residues: RNase J-like protein (421 aa).

Positions 55, 57, 59, 60, 132, 153, and 389 each coordinate Zn(2+).

Belongs to the metallo-beta-lactamase superfamily. RNA-metabolizing metallo-beta-lactamase-like family. Forms homodimers on heating to 60 degrees Celsius which may be the active form. Zn(2+) serves as cofactor.

Inhibited by imidazole. A 5'-3' exoribonuclease with a strong reference for 5'-monophosphorylated RNA and no endoribonuclease activty. This chain is RNase J-like protein, found in Methanocaldococcus jannaschii (strain ATCC 43067 / DSM 2661 / JAL-1 / JCM 10045 / NBRC 100440) (Methanococcus jannaschii).